A 147-amino-acid chain; its full sequence is Protein BUD31 homolog (147 aa).

The Nuclear localization signal motif lies at 8–12; the sequence is RRVRK.

The protein belongs to the BUD31 (G10) family. Identified in the spliceosome C complex.

The protein localises to the nucleus. Its function is as follows. Involved in pre-mRNA splicing process. This is Protein BUD31 homolog from Caenorhabditis elegans.